We begin with the raw amino-acid sequence, 115 residues long: NAD(P)H-quinone oxidoreductase subunit M (115 aa).

The protein belongs to the complex I NdhM subunit family. As to quaternary structure, NDH-1 can be composed of about 15 different subunits; different subcomplexes with different compositions have been identified which probably have different functions.

The protein resides in the cellular thylakoid membrane. It carries out the reaction a plastoquinone + NADH + (n+1) H(+)(in) = a plastoquinol + NAD(+) + n H(+)(out). The catalysed reaction is a plastoquinone + NADPH + (n+1) H(+)(in) = a plastoquinol + NADP(+) + n H(+)(out). In terms of biological role, NDH-1 shuttles electrons from an unknown electron donor, via FMN and iron-sulfur (Fe-S) centers, to quinones in the respiratory and/or the photosynthetic chain. The immediate electron acceptor for the enzyme in this species is believed to be plastoquinone. Couples the redox reaction to proton translocation, and thus conserves the redox energy in a proton gradient. Cyanobacterial NDH-1 also plays a role in inorganic carbon-concentration. This is NAD(P)H-quinone oxidoreductase subunit M from Prochlorococcus marinus subsp. pastoris (strain CCMP1986 / NIES-2087 / MED4).